A 723-amino-acid chain; its full sequence is Catalase-peroxidase (723 aa).

Residues 98-226 (WHAAGSYRAA…LAAVQMGLIY (129 aa)) constitute a cross-link (tryptophyl-tyrosyl-methioninium (Trp-Tyr) (with M-252)). Histidine 99 serves as the catalytic Proton acceptor. The tryptophyl-tyrosyl-methioninium (Tyr-Met) (with W-98) cross-link spans 226-252 (YVNPEGVNGKPDPLKTAAQVRETFARM). Histidine 267 contributes to the heme b binding site. A disordered region spans residues 267-286 (HTVGKTHGNGRAENLGPSPE).

It belongs to the peroxidase family. Peroxidase/catalase subfamily. As to quaternary structure, homodimer or homotetramer. Heme b is required as a cofactor. In terms of processing, formation of the three residue Trp-Tyr-Met cross-link is important for the catalase, but not the peroxidase activity of the enzyme.

The enzyme catalyses H2O2 + AH2 = A + 2 H2O. It carries out the reaction 2 H2O2 = O2 + 2 H2O. In terms of biological role, bifunctional enzyme with both catalase and broad-spectrum peroxidase activity. This chain is Catalase-peroxidase, found in Thioalkalivibrio sulfidiphilus (strain HL-EbGR7).